The following is a 689-amino-acid chain: Armadillo-like helical domain-containing protein 3 (689 aa).

A helical transmembrane segment spans residues Ile-520–Gly-538.

Belongs to the ARMH3 family. In terms of assembly, interacts with PI4KB. Interacts with GBF1.

Its subcellular location is the golgi apparatus membrane. The protein resides in the cytoplasm. Its function is as follows. Involved in GBF1 recruitment, Golgi maintenance and protein secretion. In Homo sapiens (Human), this protein is Armadillo-like helical domain-containing protein 3.